We begin with the raw amino-acid sequence, 405 residues long: Phosphopentomutase (405 aa).

Residues D10, D303, H308, D344, H345, and H356 each contribute to the Mn(2+) site.

It belongs to the phosphopentomutase family. Requires Mn(2+) as cofactor.

The protein resides in the cytoplasm. It carries out the reaction 2-deoxy-alpha-D-ribose 1-phosphate = 2-deoxy-D-ribose 5-phosphate. It catalyses the reaction alpha-D-ribose 1-phosphate = D-ribose 5-phosphate. Its pathway is carbohydrate degradation; 2-deoxy-D-ribose 1-phosphate degradation; D-glyceraldehyde 3-phosphate and acetaldehyde from 2-deoxy-alpha-D-ribose 1-phosphate: step 1/2. In terms of biological role, isomerase that catalyzes the conversion of deoxy-ribose 1-phosphate (dRib-1-P) and ribose 1-phosphate (Rib-1-P) to deoxy-ribose 5-phosphate (dRib-5-P) and ribose 5-phosphate (Rib-5-P), respectively. This Shewanella sediminis (strain HAW-EB3) protein is Phosphopentomutase.